We begin with the raw amino-acid sequence, 310 residues long: Methionyl-tRNA formyltransferase (310 aa).

112-115 (SLLP) serves as a coordination point for (6S)-5,6,7,8-tetrahydrofolate.

The protein belongs to the Fmt family.

The catalysed reaction is L-methionyl-tRNA(fMet) + (6R)-10-formyltetrahydrofolate = N-formyl-L-methionyl-tRNA(fMet) + (6S)-5,6,7,8-tetrahydrofolate + H(+). In terms of biological role, attaches a formyl group to the free amino group of methionyl-tRNA(fMet). The formyl group appears to play a dual role in the initiator identity of N-formylmethionyl-tRNA by promoting its recognition by IF2 and preventing the misappropriation of this tRNA by the elongation apparatus. This chain is Methionyl-tRNA formyltransferase, found in Pelagibacter ubique (strain HTCC1062).